The primary structure comprises 426 residues: Histidine--tRNA ligase 1 (426 aa).

This sequence belongs to the class-II aminoacyl-tRNA synthetase family. In terms of assembly, homodimer.

The protein localises to the cytoplasm. It catalyses the reaction tRNA(His) + L-histidine + ATP = L-histidyl-tRNA(His) + AMP + diphosphate + H(+). This Shouchella clausii (strain KSM-K16) (Alkalihalobacillus clausii) protein is Histidine--tRNA ligase 1.